The sequence spans 684 residues: Frizzled-8 (684 aa).

Residues 1 to 27 (MEWGYLLEVTSLLAALAVLQRSSGAAA) form the signal peptide. Over 28 to 271 (ASAKELACQE…NPFFSQDERA (244 aa)) the chain is Extracellular. An FZ domain is found at 30–151 (AKELACQEIT…GNPDTLCMDY (122 aa)). 5 cysteine pairs are disulfide-bonded: cysteine 35-cysteine 96, cysteine 43-cysteine 89, cysteine 80-cysteine 118, cysteine 107-cysteine 148, and cysteine 111-cysteine 135. N-linked (GlcNAc...) asparagine glycosylation occurs at asparagine 49. Position 71 to 78 (71 to 78 (QFWPLVEI)) interacts with hexadecanoate. A wnt-binding region spans residues 95–100 (ICLEDY). Residues 147 to 152 (LCMDYN) are wnt-binding. Residue asparagine 152 is glycosylated (N-linked (GlcNAc...) asparagine). The disordered stretch occupies residues 155–222 (DLTTAAPSPP…KARPPGGGAA (68 aa)). Residues 161–175 (PSPPRRLPPPQPGEQ) show a composition bias toward pro residues. Low complexity-rich tracts occupy residues 176 to 186 (PPSGSGHSRPP) and 199 to 222 (GSGDTAAAPPSRGGKARPPGGGAA). The helical transmembrane segment at 272 to 292 (FTVFWIGLWSVLCFVSTFATV) threads the bilayer. The Cytoplasmic portion of the chain corresponds to 293 to 308 (STFLIDMERFKYPERP). Residues 309–329 (IIFLSACYLFVSVGYLVRLVA) traverse the membrane as a helical segment. At 330 to 393 (GHEKVACSGG…RYETTGPALC (64 aa)) the chain is on the extracellular side. Residues 394–414 (TVVFLLVYFFGMASSIWWVIL) form a helical membrane-spanning segment. Over 415-436 (SLTWFLAAGMKWGNEAIAGYSQ) the chain is Cytoplasmic. A helical transmembrane segment spans residues 437 to 457 (YFHLAAWLVPSVKSIAVLALS). Topologically, residues 458 to 480 (SVDGDPVAGICYVGNQSLDNLRG) are extracellular. Residue asparagine 472 is glycosylated (N-linked (GlcNAc...) asparagine). The chain crosses the membrane as a helical span at residues 481 to 501 (FVLAPLVIYLFIGTMFLLAGF). Topologically, residues 502-529 (VSLFRIRSVIKQQGGPTKTHKLEKLMIR) are cytoplasmic. Residues 530 to 550 (LGLFTVLYTVPAAVVVACLFY) form a helical membrane-spanning segment. The Extracellular portion of the chain corresponds to 551-581 (EQHNRPRWEATHNCPCLRDLQPDQARRPDYA). The helical transmembrane segment at 582–602 (VFMLKYFMCLVVGITSGVWVW) threads the bilayer. At 603–684 (SGKTLESWRA…YPKQMPLSQV (82 aa)) the chain is on the cytoplasmic side. The Lys-Thr-X-X-X-Trp motif, mediates interaction with the PDZ domain of Dvl family members motif lies at 605-610 (KTLESW). The segment covering 630–654 (AGGSGPGGGGPGPGGGGGHGGGGGS) has biased composition (gly residues). A disordered region spans residues 630–655 (AGGSGPGGGGPGPGGGGGHGGGGGSL). A PDZ-binding motif is present at residues 682-684 (SQV).

This sequence belongs to the G-protein coupled receptor Fz/Smo family. In terms of assembly, component of a Wnt-signaling complex that contains a WNT protein, a FZD protein and LRP5 or LRP6. Interacts directly with LRP5 or LRP6; the interaction is promoted by Wnt-binding and signaling and inhibited by DKK1. Interacts (via the PDZ-binding motif) with GPOC (via its PDZ domain). Interacts with RSPO1 and RSPO3. Interacts with glypican GPC3. Ubiquitinated by ZNRF3, leading to its degradation by the proteasome.

It is found in the membrane. The protein resides in the golgi apparatus. It localises to the cell membrane. Receptor for Wnt proteins. Component of the Wnt-Fzd-LRP5-LRP6 complex that triggers beta-catenin signaling through inducing aggregation of receptor-ligand complexes into ribosome-sized signalosomes. The beta-catenin canonical signaling pathway leads to the activation of disheveled proteins, inhibition of GSK-3 kinase, nuclear accumulation of beta-catenin and activation of Wnt target genes. A second signaling pathway involving PKC and calcium fluxes has been seen for some family members, but it is not yet clear if it represents a distinct pathway or if it can be integrated in the canonical pathway, as PKC seems to be required for Wnt-mediated inactivation of GSK-3 kinase. Both pathways seem to involve interactions with G-proteins. May be involved in transduction and intercellular transmission of polarity information during tissue morphogenesis and/or in differentiated tissues. Coreceptor along with RYK of Wnt proteins, such as WNT1. This is Frizzled-8 (Fzd8) from Rattus norvegicus (Rat).